Reading from the N-terminus, the 136-residue chain is Large-conductance mechanosensitive channel (136 aa).

2 helical membrane passes run 10-30 and 76-96; these read FAMRGNVVDLAVGVIIGAAFG and GAFIQNIFDFVIVAFAIFIAI.

It belongs to the MscL family. As to quaternary structure, homopentamer.

The protein resides in the cell inner membrane. Functionally, channel that opens in response to stretch forces in the membrane lipid bilayer. May participate in the regulation of osmotic pressure changes within the cell. This chain is Large-conductance mechanosensitive channel, found in Pectobacterium atrosepticum (strain SCRI 1043 / ATCC BAA-672) (Erwinia carotovora subsp. atroseptica).